Consider the following 343-residue polypeptide: Inositol 2-dehydrogenase 1 (343 aa).

This sequence belongs to the Gfo/Idh/MocA family. As to quaternary structure, homotetramer.

The catalysed reaction is myo-inositol + NAD(+) = scyllo-inosose + NADH + H(+). Its function is as follows. Involved in the oxidation of myo-inositol (MI) to 2-keto-myo-inositol (2KMI or 2-inosose). The protein is Inositol 2-dehydrogenase 1 of Mycolicibacterium vanbaalenii (strain DSM 7251 / JCM 13017 / BCRC 16820 / KCTC 9966 / NRRL B-24157 / PYR-1) (Mycobacterium vanbaalenii).